The chain runs to 517 residues: E3 ubiquitin-protein ligase TRIM65 (517 aa).

At Ala2 the chain carries N-acetylalanine. The RING-type zinc-finger motif lies at Cys12–Arg51. The interval Ala75–Arg94 is disordered. The segment at Asp90 to Arg137 adopts a B box-type zinc-finger fold. Zn(2+) is bound by residues Cys95, His98, Cys117, and His125. A coiled-coil region spans residues Ala139 to Val227. Position 185 is a phosphoserine (Ser185). Lys206 participates in a covalent cross-link: (Microbial infection) Glycyl lysine isopeptide (Lys-Gly) (interchain with G-Cter in ubiquitin). Positions Ala313 to Val506 constitute a B30.2/SPRY domain.

Belongs to the TRIM/RBCC family. In terms of assembly, homo-multimerizes. Interacts with ARRDC4.

Its subcellular location is the cytoplasm. The enzyme catalyses S-ubiquitinyl-[E2 ubiquitin-conjugating enzyme]-L-cysteine + [acceptor protein]-L-lysine = [E2 ubiquitin-conjugating enzyme]-L-cysteine + N(6)-ubiquitinyl-[acceptor protein]-L-lysine.. It functions in the pathway protein modification; protein ubiquitination. In terms of biological role, E3 ubiquitin ligase that plays a role in several processes including innate immnity, autophagy or inflammation. Negatively regulates miRNAs by modulating the ubiquitination and stability of TNRC6A, a protein involved in RNA-mediated gene silencing by both micro-RNAs (miRNAs) and short interfering RNAs. This ubiquitination results in the suppressed expression of miR-138-5p leading to increased autophagy. Upon enteroviral infection, promotes 'Lys-63'-mediated ubiquitination activation of IFIH1/MDA5 leading to innate signaling cascade. Mechanistically, selectively recognizes MDA5 filaments that occur on dsRNAs. Plays also a role in limitation of inflammation through different mechanisms. First, promotes 'Lys-48'-mediated ubiquitination of VCAM1 leading to its degradation and limitation of LPS-induced lung inflammation. In addition, negatively regulates inflammasome activation by promoting 'lys48'-linked ubiquitination of NLRP3 which is critical for the inhibition of NLRP3 inflammasome activation in resting macrophages. This chain is E3 ubiquitin-protein ligase TRIM65 (TRIM65), found in Homo sapiens (Human).